Here is a 141-residue protein sequence, read N- to C-terminus: Nucleoside diphosphate kinase (141 aa).

ATP-binding residues include lysine 11, phenylalanine 59, arginine 87, threonine 93, arginine 104, and asparagine 114. Histidine 117 serves as the catalytic Pros-phosphohistidine intermediate.

This sequence belongs to the NDK family. In terms of assembly, homotetramer. Requires Mg(2+) as cofactor.

Its subcellular location is the cytoplasm. The catalysed reaction is a 2'-deoxyribonucleoside 5'-diphosphate + ATP = a 2'-deoxyribonucleoside 5'-triphosphate + ADP. It carries out the reaction a ribonucleoside 5'-diphosphate + ATP = a ribonucleoside 5'-triphosphate + ADP. Its function is as follows. Major role in the synthesis of nucleoside triphosphates other than ATP. The ATP gamma phosphate is transferred to the NDP beta phosphate via a ping-pong mechanism, using a phosphorylated active-site intermediate. The polypeptide is Nucleoside diphosphate kinase (Cupriavidus taiwanensis (strain DSM 17343 / BCRC 17206 / CCUG 44338 / CIP 107171 / LMG 19424 / R1) (Ralstonia taiwanensis (strain LMG 19424))).